The chain runs to 359 residues: Histidinol-phosphate aminotransferase (359 aa).

K217 is modified (N6-(pyridoxal phosphate)lysine).

Belongs to the class-II pyridoxal-phosphate-dependent aminotransferase family. Histidinol-phosphate aminotransferase subfamily. Homodimer. The cofactor is pyridoxal 5'-phosphate.

The catalysed reaction is L-histidinol phosphate + 2-oxoglutarate = 3-(imidazol-4-yl)-2-oxopropyl phosphate + L-glutamate. It participates in amino-acid biosynthesis; L-histidine biosynthesis; L-histidine from 5-phospho-alpha-D-ribose 1-diphosphate: step 7/9. In Salmonella arizonae (strain ATCC BAA-731 / CDC346-86 / RSK2980), this protein is Histidinol-phosphate aminotransferase.